Reading from the N-terminus, the 240-residue chain is Protein MGARP (240 aa).

At 1 to 45 the chain is on the cytoplasmic side; that stretch reads MYLRRAVSKTLALPLRAPPGPAPLRKDASLRWISSNKFPGSSGSN. The helical; Anchor for type IV membrane protein transmembrane segment at 46–64 threads the bilayer; the sequence is MIYYLVVGVTVSAGGYYTY. At 65-240 the chain is on the mitochondrial intermembrane side; sequence KRVTSGKAKR…AGSEAASAQG (176 aa). The segment at 72-240 is disordered; that stretch reads AKRSDHVTDL…AGSEAASAQG (169 aa). The segment covering 73–87 has biased composition (basic and acidic residues); the sequence is KRSDHVTDLKEKTKA. 2 stretches are compositionally biased toward low complexity: residues 166-183 and 228-240; these read TVETTEVSTETTSEVTST and EACAGSEAASAQG.

In terms of assembly, interacts with RHOT1/Miro-1, RHOT2/Miro-2, TRAK1/OIP106 and TRAK2/GRIF1.

The protein resides in the mitochondrion. The protein localises to the mitochondrion outer membrane. It localises to the mitochondrion inner membrane. In terms of biological role, plays a role in the trafficking of mitochondria along microtubules. Regulates the kinesin-mediated axonal transport of mitochondria to nerve terminals along microtubules during hypoxia. Participates in the translocation of TRAK2/GRIF1 from the cytoplasm to the mitochondrion. Also plays a role in steroidogenesis through maintenance of mitochondrial abundance and morphology. Plays an inhibitory role during neocortex development by regulating mitochondrial morphology, distribution and motility in neocortical neurons. The polypeptide is Protein MGARP (MGARP) (Bos taurus (Bovine)).